The primary structure comprises 591 residues: Proteasome-associated ATPase (591 aa).

Positions 10-77 (VAAAEELHAL…LREEVDRLGQ (68 aa)) form a coiled coil. 278–283 (GCGKTL) is an ATP binding site. The interval 590–591 (YL) is docks into pockets in the proteasome alpha-ring.

Belongs to the AAA ATPase family. In terms of assembly, homohexamer. Assembles into a hexameric ring structure that likely caps the 20S proteasome core. Can form a complex composed of two stacked hexameric rings in vitro. Probably interacts with the prokaryotic ubiquitin-like protein Pup through a hydrophobic interface; the expected interacting region of ARC lies in its N-terminal coiled-coil domain. There is likely one Pup binding site per ARC hexamer ring. Upon ATP-binding, the C-terminus of ARC probably interacts with the alpha-rings of the proteasome core, possibly by binding to the intersubunit pockets.

It participates in protein degradation; proteasomal Pup-dependent pathway. With respect to regulation, ATPase activity is inhibited by N-ethylmaleimide (NEM) but not by sodium azide. ATPase which is responsible for recognizing, binding, unfolding and translocation of pupylated proteins into the bacterial 20S proteasome core particle. May be essential for opening the gate of the 20S proteasome via an interaction with its C-terminus, thereby allowing substrate entry and access to the site of proteolysis. Thus, the C-termini of the proteasomal ATPase may function like a 'key in a lock' to induce gate opening and therefore regulate proteolysis. This is Proteasome-associated ATPase from Rhodococcus erythropolis (Arthrobacter picolinophilus).